The following is a 21-amino-acid chain: ISAEAPLYAEVGMPALSPTMT.

Belongs to the 2-oxoacid dehydrogenase family. Forms a 60-polypeptide structural core. Requires (R)-lipoate as cofactor.

It is found in the mitochondrion matrix. The catalysed reaction is N(6)-[(R)-dihydrolipoyl]-L-lysyl-[protein] + acetyl-CoA = N(6)-[(R)-S(8)-acetyldihydrolipoyl]-L-lysyl-[protein] + CoA. In terms of biological role, the pyruvate dehydrogenase complex catalyzes the overall conversion of pyruvate to acetyl-CoA and CO(2). It contains multiple copies of three enzymatic components: pyruvate dehydrogenase (E1), dihydrolipoamide acetyltransferase (E2) and lipoamide dehydrogenase (E3). The chain is 78 kDa dihydrolipoyllysine-residue acetyltransferase component of pyruvate dehydrogenase complex from Solanum tuberosum (Potato).